The primary structure comprises 245 residues: Acetylglutamate kinase (245 aa).

Substrate-binding positions include 41–42 (GG), arginine 63, and asparagine 156.

The protein belongs to the acetylglutamate kinase family. ArgB subfamily.

The protein localises to the cytoplasm. It catalyses the reaction N-acetyl-L-glutamate + ATP = N-acetyl-L-glutamyl 5-phosphate + ADP. The protein operates within amino-acid biosynthesis; L-arginine biosynthesis; N(2)-acetyl-L-ornithine from L-glutamate: step 2/4. In terms of biological role, catalyzes the ATP-dependent phosphorylation of N-acetyl-L-glutamate. The polypeptide is Acetylglutamate kinase (Staphylococcus epidermidis (strain ATCC 35984 / DSM 28319 / BCRC 17069 / CCUG 31568 / BM 3577 / RP62A)).